The chain runs to 381 residues: Probable envelope ADP,ATP carrier protein, chloroplastic (381 aa).

A chloroplast-targeting transit peptide spans methionine 1–proline 26. Transmembrane regions (helical) follow at residues leucine 78–glycine 98, leucine 154–lysine 179, leucine 191–leucine 211, isoleucine 237–valine 257, and leucine 281–valine 301. Solcar repeat units follow at residues proline 85–leucine 177, leucine 185–serine 268, and serine 279–leucine 359. Arginine 159 is a binding site for ADP. Arginine 302 lines the ADP pocket. The chain crosses the membrane as a helical span at residues glycine 334–isoleucine 360.

It belongs to the mitochondrial carrier (TC 2.A.29) family.

The protein resides in the plastid. The protein localises to the chloroplast membrane. Its function is as follows. Transports adenine nucleotides. In Arabidopsis thaliana (Mouse-ear cress), this protein is Probable envelope ADP,ATP carrier protein, chloroplastic (EAAC).